The sequence spans 141 residues: Photosystem II protein PSBR, chloroplastic (141 aa).

Residues 1–27 (MATMQISAKGLAPLRPRVSSRRVVKPV) constitute a chloroplast transit peptide. Thr34 and Thr37 each carry phosphothreonine. Phosphoserine is present on Ser43. Residues 114–134 (GLIAWAGLVLVLLAVGVNLII) traverse the membrane as a helical segment.

This sequence belongs to the psbR family.

The protein localises to the plastid. It localises to the chloroplast thylakoid membrane. In terms of biological role, associated with the oxygen-evolving complex of photosystem II (PSII). Is required for the stable binding of LHCSR3 to PSII-LHCII supercomplexes and is essential for efficient energy-dependent quenching and the integrity of the PSII-LHCII-LHCSR3 supercomplex under continuous high light. The protein is Photosystem II protein PSBR, chloroplastic of Chlamydomonas reinhardtii (Chlamydomonas smithii).